A 277-amino-acid chain; its full sequence is Large ribosomal subunit protein uL2 (277 aa).

Disordered regions lie at residues 32–58 and 225–277; these read KSLT…RGGG and VAMN…RRNK. The span at 258-277 shows a compositional bias: basic residues; it reads YKTRKKKRYSDKFIIKRRNK.

This sequence belongs to the universal ribosomal protein uL2 family. As to quaternary structure, part of the 50S ribosomal subunit. Forms a bridge to the 30S subunit in the 70S ribosome.

Functionally, one of the primary rRNA binding proteins. Required for association of the 30S and 50S subunits to form the 70S ribosome, for tRNA binding and peptide bond formation. It has been suggested to have peptidyltransferase activity; this is somewhat controversial. Makes several contacts with the 16S rRNA in the 70S ribosome. This chain is Large ribosomal subunit protein uL2, found in Borrelia garinii subsp. bavariensis (strain ATCC BAA-2496 / DSM 23469 / PBi) (Borreliella bavariensis).